The chain runs to 592 residues: MAAPQITLSVLVIALLTCSVTAYPNGKVPMSCGGMIPQHNHSPQSEPIHQITVSQTTFKPGDQIEVTLSGPPFRGFLLEARDAENLSGPPIGSFTLIDSEESQLLTCTDVQGLAVSHTRSSKKTEIKVYWDAPSPAPDHIRFLATVVQKFKIYWVKIPSPVISQPNAPPFTTPKATTQPLTTPPSVSHLTKPFSAFECGNKKFCVRSPLNCDPEKEPACVFLSFTRDNQSVMVEMSGPSDGYVSFAFSHDQWMGDDDAYLCIREDQTVDIQPSYLTGRSYPVMDSRGTLEDMAWRLADGVIQCSFRRNITLPEAKNRFVLNESYYIFFAEGPSHDGRIFRHSQQPLITYEKYNVTDTPKSVGGSRSSPLLKAHGALMFVAWMTTVSIGVLVARFFRSVWSKAFFLREAAWFQVHRMLMVATSLLTCVAFVLPFVYRGGWSWRAGYHPYLGCTVMTLAVLQPLLATFRPPLHDPRRQVFNWTHWSVGTAARIIAVAAMFLGMDLPGLNLPSPQKTYAMMGFVVWHIGTEVILEIHAYRLSRKVEILDNDRIQILQSLTVAEAEGHVFKKVVLAVYICGNVIFLSIFLSAINHI.

The chain crosses the membrane as a helical span at residues 2–22 (AAPQITLSVLVIALLTCSVTA). The 167-residue stretch at 13–179 (IALLTCSVTA…FTTPKATTQP (167 aa)) folds into the Reelin domain. 4 N-linked (GlcNAc...) asparagine glycosylation sites follow: Asn-85, Asn-308, Asn-321, and Asn-353. In terms of domain architecture, DOMON spans 216–331 (EPACVFLSFT…ESYYIFFAEG (116 aa)). Residues 335-534 (DGRIFRHSQQ…IGTEVILEIH (200 aa)) enclose the Cytochrome b561 domain. A helical membrane pass occupies residues 372–392 (AHGALMFVAWMTTVSIGVLVA). Positions 373 and 414 each coordinate heme b. A run of 5 helical transmembrane segments spans residues 415-435 (RMLM…PFVY), 446-466 (HPYL…LATF), 477-499 (VFNW…AMFL), 515-535 (YAMM…EIHA), and 569-589 (VVLA…LSAI). Residues His-446 and His-482 each coordinate heme b.

It belongs to the FRRS1 family. Requires heme b as cofactor. In terms of tissue distribution, expressed in spleen, liver and kidney with low expression in brain. Localizes in adult brain to the choroid plexus of the fourth, third, and lateral ventricles and to ependymal cells that line the ventricles.

It localises to the membrane. Ferric-chelate reductases reduce Fe(3+) to Fe(2+) before its transport from the endosome to the cytoplasm. The protein is Ferric-chelate reductase 1 (FRRS1) of Mus musculus (Mouse).